A 351-amino-acid polypeptide reads, in one-letter code: Protein Wnt-4 (351 aa).

The signal sequence occupies residues 1 to 22 (MSPEYFLRSLLLIILATFSANA). Asparagine 21 and asparagine 88 each carry an N-linked (GlcNAc...) asparagine glycan. 11 cysteine pairs are disulfide-bonded: cysteine 78–cysteine 89, cysteine 128–cysteine 136, cysteine 138–cysteine 155, cysteine 206–cysteine 220, cysteine 208–cysteine 215, cysteine 280–cysteine 311, cysteine 296–cysteine 306, cysteine 310–cysteine 350, cysteine 326–cysteine 341, cysteine 328–cysteine 338, and cysteine 333–cysteine 334. A lipid anchor (O-palmitoleoyl serine; by PORCN) is attached at serine 212. N-linked (GlcNAc...) asparagine glycosylation occurs at asparagine 297.

It belongs to the Wnt family. In terms of assembly, interacts with CPZ. Post-translationally, palmitoleoylation is required for efficient binding to frizzled receptors. Depalmitoleoylation leads to Wnt signaling pathway inhibition. As to expression, predominantly expressed in the diencephalon neuromere D2.

The protein resides in the secreted. The protein localises to the extracellular space. It is found in the extracellular matrix. Functionally, ligand for members of the frizzled family of seven transmembrane receptors. Plays an important role in embryonic development. In Gallus gallus (Chicken), this protein is Protein Wnt-4 (WNT4).